A 64-amino-acid polypeptide reads, in one-letter code: MRIHVDQDKCCGAGSCVLAAPDVFDQREEDGIVVLLDTAPPAALHDAVREAATICPAAAITVTD.

The 4Fe-4S ferredoxin-type domain occupies 2–29; the sequence is RIHVDQDKCCGAGSCVLAAPDVFDQREE. 3 residues coordinate [3Fe-4S] cluster: Cys-10, Cys-16, and Cys-55.

The cofactor is [3Fe-4S] cluster.

Electron transport protein for the cytochrome P-450-SU2 system. In Streptomyces griseolus, this protein is Ferredoxin-2 (subB).